Here is a 345-residue protein sequence, read N- to C-terminus: Phosphoribosylformylglycinamidine cyclo-ligase (345 aa).

Belongs to the AIR synthase family.

The protein localises to the cytoplasm. The enzyme catalyses 2-formamido-N(1)-(5-O-phospho-beta-D-ribosyl)acetamidine + ATP = 5-amino-1-(5-phospho-beta-D-ribosyl)imidazole + ADP + phosphate + H(+). It participates in purine metabolism; IMP biosynthesis via de novo pathway; 5-amino-1-(5-phospho-D-ribosyl)imidazole from N(2)-formyl-N(1)-(5-phospho-D-ribosyl)glycinamide: step 2/2. The sequence is that of Phosphoribosylformylglycinamidine cyclo-ligase from Shewanella putrefaciens (strain CN-32 / ATCC BAA-453).